The following is a 409-amino-acid chain: Serine protease inhibitor 2 (409 aa).

Residues 1–21 (MNKLNFVILCLAALLVFDATA) form the signal peptide. 2 N-linked (GlcNAc...) asparagine glycosylation sites follow: asparagine 294 and asparagine 324. Positions 356–360 (LGSEA) match the Hinge region; required for binding to peptidase motif.

The protein belongs to the serpin family. Forms a covalent heterodimer with protease CLIPB9; the interaction inhibits CLIPB9 protease activity. Forms a covalent heterodimer with protease CLIPB10; the interaction inhibits CLIPB10 catalytic activity. Interacts with CLIPB4 in the hemolymph of immune-challenged female mosquitoes; the interaction results in CLIPB4 inhibition. Protease CLIPB9 binds to SRPN2 via the hinge region resulting in the cleavage of the reactive bond. This leads to a conformational change in SRPN2 which traps CLIPB9 and distorts its active site, resulting in CLIPB9 inactivation.

It is found in the secreted. Functionally, serine protease inhibitor that functions in the melanization-mediated immune response. By preventing the activation of phenoloxidases through the inhibiting of serine proteases CLIPB9, CLIPB10 and CLIPB4, negatively regulates melanization in the hemolymph. By preventing melanization, has a detrimental role during P.berghei parasite mediated-infection and invasion of the mosquito midgut. This chain is Serine protease inhibitor 2, found in Anopheles gambiae (African malaria mosquito).